The chain runs to 356 residues: Uroporphyrinogen decarboxylase (356 aa).

Substrate-binding positions include 27–31 (RQAGR), Asp77, Tyr154, Thr209, and His327.

This sequence belongs to the uroporphyrinogen decarboxylase family. As to quaternary structure, homodimer.

Its subcellular location is the cytoplasm. It carries out the reaction uroporphyrinogen III + 4 H(+) = coproporphyrinogen III + 4 CO2. It participates in porphyrin-containing compound metabolism; protoporphyrin-IX biosynthesis; coproporphyrinogen-III from 5-aminolevulinate: step 4/4. In terms of biological role, catalyzes the decarboxylation of four acetate groups of uroporphyrinogen-III to yield coproporphyrinogen-III. The protein is Uroporphyrinogen decarboxylase of Hahella chejuensis (strain KCTC 2396).